The following is a 370-amino-acid chain: MTDNPNKKTFWDKVHLDPTMLLILLALLVYSALVIWSASGQDIGMMERKIGQIAMGLVIMVVMAQIPPRVYEGWAPYLYIICIILLVAVDAFGAISKGAQRWLDLGIVRFQPSEIAKIAVPLMVARFINRDVCPPSLKNTGIALVLIFMPTLLVAAQPDLGTSILVALSGLFVLFLSGLSWRLIGVAVVLVAAFIPILWFFLMHDYQRQRVMMLLDPESDPLGAGYHIIQSKIAIGSGGLRGKGWLHGTQSQLEFLPERHTDFIFAVLAEELGLVGILILLALYILLIMRGLWIAARAQTTFGRVMAGGLMLILFVYVFVNIGMVSGILPVVGVPLPLVSYGGSALIVLMAGFGIVMSIHTHRKMLSKSV.

9 consecutive transmembrane segments (helical) span residues Met20–Gly40, Ile50–Val70, Ala75–Ile95, Ser136–Ala156, Leu160–Ser180, Leu183–Met203, Phe263–Leu283, Leu312–Val332, and Leu336–Val356.

Belongs to the SEDS family. MrdB/RodA subfamily.

The protein localises to the cell inner membrane. The enzyme catalyses [GlcNAc-(1-&gt;4)-Mur2Ac(oyl-L-Ala-gamma-D-Glu-L-Lys-D-Ala-D-Ala)](n)-di-trans,octa-cis-undecaprenyl diphosphate + beta-D-GlcNAc-(1-&gt;4)-Mur2Ac(oyl-L-Ala-gamma-D-Glu-L-Lys-D-Ala-D-Ala)-di-trans,octa-cis-undecaprenyl diphosphate = [GlcNAc-(1-&gt;4)-Mur2Ac(oyl-L-Ala-gamma-D-Glu-L-Lys-D-Ala-D-Ala)](n+1)-di-trans,octa-cis-undecaprenyl diphosphate + di-trans,octa-cis-undecaprenyl diphosphate + H(+). It functions in the pathway cell wall biogenesis; peptidoglycan biosynthesis. In terms of biological role, peptidoglycan polymerase that is essential for cell wall elongation. In Escherichia coli O157:H7, this protein is Peptidoglycan glycosyltransferase MrdB.